We begin with the raw amino-acid sequence, 336 residues long: F-box protein At5g50450 (336 aa).

Residues 19 to 70 (NNHFEDLHDDLIISILRKLATSASSPSDFLTVLSTCKRLNRLGLHPLVLSKA) enclose the F-box domain. Positions 263, 266, 279, 282, 288, 292, 301, and 305 each coordinate Zn(2+). An MYND-type; atypical zinc finger spans residues 263–305 (HGGCGRPETRAHEFRRCSVCGKVNYCSRGCQALDWRAKHKVEC).

The chain is F-box protein At5g50450 from Arabidopsis thaliana (Mouse-ear cress).